We begin with the raw amino-acid sequence, 235 residues long: Ribonuclease 3 (235 aa).

The 129-residue stretch at 7 to 135 folds into the RNase III domain; sequence FAALEARLGH…VVAAVYLDGG (129 aa). Glu48 is a Mg(2+) binding site. The active site involves Asp52. Asp121 and Glu124 together coordinate Mg(2+). Glu124 is a catalytic residue. The region spanning 160-229 is the DRBM domain; sequence DPKTVLQEWA…ASAFLAREGV (70 aa).

It belongs to the ribonuclease III family. In terms of assembly, homodimer. It depends on Mg(2+) as a cofactor.

Its subcellular location is the cytoplasm. It catalyses the reaction Endonucleolytic cleavage to 5'-phosphomonoester.. In terms of biological role, digests double-stranded RNA. Involved in the processing of primary rRNA transcript to yield the immediate precursors to the large and small rRNAs (23S and 16S). Processes some mRNAs, and tRNAs when they are encoded in the rRNA operon. Processes pre-crRNA and tracrRNA of type II CRISPR loci if present in the organism. The sequence is that of Ribonuclease 3 from Azorhizobium caulinodans (strain ATCC 43989 / DSM 5975 / JCM 20966 / LMG 6465 / NBRC 14845 / NCIMB 13405 / ORS 571).